A 613-amino-acid chain; its full sequence is Ribosome-associated molecular chaperone SSB1 (613 aa).

Ala-2 bears the N-acetylalanine mark. The tract at residues 2–391 is nucleotide binding domain (NBD); that stretch reads AEGVFQGAIG…ILTGQSTSDE (390 aa). An ATP-binding site is contributed by 16–18; the sequence is TTY. Thr-47 is modified (phosphothreonine). ATP is bound by residues Lys-73, 205–207, 271–278, and Gly-342; these read GGT and ERAKRTLS. The segment at 392–402 is inter-domain linker; it reads TKDLLLLDVAP. Residues 403–613 are substrate binding domain (SBD); the sequence is LSLGVGMQGD…RVVTKAMSSR (211 aa). Positions 428 to 430 match the Contributes to ribosome binding motif; sequence KRR. Phosphothreonine is present on Thr-431. A lid domain (SBDalpha) region spans residues 516-612; sequence SEEIEKMVNQ…KRVVTKAMSS (97 aa). The Nuclear export signal motif lies at 574–582; the sequence is IEAALSDAL. Positions 601 to 613 are required for interaction with ribosomes; sequence GLKRVVTKAMSSR.

This sequence belongs to the heat shock protein 70 family. Ssb-type Hsp70 subfamily. As to quaternary structure, binds to ribosomes. Binds close to the ribosomal tunnel exit via contacts with both ribosomal proteins RPL35, RPL39 and RPL19, and rRNA. Directly interacts with nascent polypeptides. This interaction is dependent on the ribosome-associated complex (RAC). Interacts with SSE1. Interacts with FES1. Interacts with NAP1.

It localises to the cytoplasm. The enzyme catalyses ATP + H2O = ADP + phosphate + H(+). Ribosome-bound, Hsp70-type chaperone that assists in the cotranslational folding of newly synthesized proteins in the cytosol. Stimulates folding by interacting with nascent chains, binding to short, largely hydrophobic sequences exposed by unfolded proteins, thereby stabilizing longer, more slowly translated, and aggregation-prone nascent polypeptides and domains that cannot fold stably until fully synthesized. The Hsp70-protein substrate interaction depends on ATP-binding and on allosteric regulation between the NBD and the SBD. The ATP-bound state is characterized by a fast exchange rate of substrate (low affinity state), while in the ADP-bound state exchange is much slower (high affinity state). During the Hsp70 cycle, the chaperone switches between the ATP-bound state (open conformation) and the ADP-bound state (closed conformation) by major conformational rearrangements involving mainly the lid domain. Ssb cooperates with a specific Hsp40/Hsp70 co-chaperone termed the ribosome-associated complex (RAC), which stimulates the ATPase activity of the ribosome-associated pool of Ssbs and switches it to the high affinity substrate binding state. Hsp110 chaperone SSE1 and FES1 act as nucleotide exchange factors that cause substrate release. The protein is Ribosome-associated molecular chaperone SSB1 of Saccharomyces cerevisiae (strain ATCC 204508 / S288c) (Baker's yeast).